The chain runs to 205 residues: Ribosomal RNA small subunit methyltransferase G (205 aa).

Residues G66, F71, 119 to 120 (IE), and R135 contribute to the S-adenosyl-L-methionine site.

It belongs to the methyltransferase superfamily. RNA methyltransferase RsmG family.

It is found in the cytoplasm. The catalysed reaction is guanosine(527) in 16S rRNA + S-adenosyl-L-methionine = N(7)-methylguanosine(527) in 16S rRNA + S-adenosyl-L-homocysteine. Its function is as follows. Specifically methylates the N7 position of guanine in position 527 of 16S rRNA. The sequence is that of Ribosomal RNA small subunit methyltransferase G from Rhizobium etli (strain ATCC 51251 / DSM 11541 / JCM 21823 / NBRC 15573 / CFN 42).